The following is a 232-amino-acid chain: Y-linked testis-specific protein 1 (232 aa).

The protein belongs to the SPIN/STSY family. Expressed in testis (at protein level).

The protein is Y-linked testis-specific protein 1 (Ssty1) of Mus musculus (Mouse).